The primary structure comprises 391 residues: Putative F-box protein At1g47730 (391 aa).

Basic and acidic residues predominate over residues 1–12 (MEQREEKTENIQ). The segment at 1–25 (MEQREEKTENIQRKRSRGKSSSSSL) is disordered. The region spanning 19–68 (KSSSSSLPLDLTSEIFSRLPAKSVVRFRCVSKLWSSITTAPYFTNSFETR) is the F-box domain.

In Arabidopsis thaliana (Mouse-ear cress), this protein is Putative F-box protein At1g47730.